The chain runs to 234 residues: Leucyl/phenylalanyl-tRNA--protein transferase (234 aa).

It belongs to the L/F-transferase family.

Its subcellular location is the cytoplasm. The enzyme catalyses N-terminal L-lysyl-[protein] + L-leucyl-tRNA(Leu) = N-terminal L-leucyl-L-lysyl-[protein] + tRNA(Leu) + H(+). It carries out the reaction N-terminal L-arginyl-[protein] + L-leucyl-tRNA(Leu) = N-terminal L-leucyl-L-arginyl-[protein] + tRNA(Leu) + H(+). The catalysed reaction is L-phenylalanyl-tRNA(Phe) + an N-terminal L-alpha-aminoacyl-[protein] = an N-terminal L-phenylalanyl-L-alpha-aminoacyl-[protein] + tRNA(Phe). Its function is as follows. Functions in the N-end rule pathway of protein degradation where it conjugates Leu, Phe and, less efficiently, Met from aminoacyl-tRNAs to the N-termini of proteins containing an N-terminal arginine or lysine. This chain is Leucyl/phenylalanyl-tRNA--protein transferase, found in Pectobacterium carotovorum subsp. carotovorum (strain PC1).